We begin with the raw amino-acid sequence, 81 residues long: Protein GPR15LG (81 aa).

The N-terminal stretch at Met-1–Gly-24 is a signal peptide. Disulfide bonds link Cys-40-Cys-63 and Cys-41-Cys-60.

Interacts with SUSD2; the interaction is direct.

The protein localises to the secreted. Functionally, highly cationic protein that has multiple functions. Acts as a chemotactic factor that mediates lymphocytes recruitment to epithelia through binding and activation of the G-protein coupled receptor GPR15. May be a tumor suppressor; together with SUSD2 has a growth inhibitory effect on colon cancer cells which includes G1 cell cycle arrest. May regulate keratinocyte proliferation. In addition, through activation of Mas-related G protein-coupled receptors (MRGPRs) contributes to pruritogenesis by activating itch-selective sensory neurons and mast cells degranulation. Has antimicrobial activity against Gram-positive bacteria, including Staphylococcus aureus and Actinomyces spec., and Mycoplasma hominis and lentivirus. The chain is Protein GPR15LG (GPR15LG) from Sus scrofa (Pig).